The sequence spans 404 residues: Chorismate synthase (404 aa).

Positions 40 and 46 each coordinate NADP(+). FMN contacts are provided by residues 136–138 (RAS), 257–258 (QA), G301, 316–320 (KPIST), and R342.

This sequence belongs to the chorismate synthase family. As to quaternary structure, homotetramer. FMNH2 is required as a cofactor.

The catalysed reaction is 5-O-(1-carboxyvinyl)-3-phosphoshikimate = chorismate + phosphate. It participates in metabolic intermediate biosynthesis; chorismate biosynthesis; chorismate from D-erythrose 4-phosphate and phosphoenolpyruvate: step 7/7. Functionally, catalyzes the anti-1,4-elimination of the C-3 phosphate and the C-6 proR hydrogen from 5-enolpyruvylshikimate-3-phosphate (EPSP) to yield chorismate, which is the branch point compound that serves as the starting substrate for the three terminal pathways of aromatic amino acid biosynthesis. This reaction introduces a second double bond into the aromatic ring system. This is Chorismate synthase from Mycolicibacterium vanbaalenii (strain DSM 7251 / JCM 13017 / BCRC 16820 / KCTC 9966 / NRRL B-24157 / PYR-1) (Mycobacterium vanbaalenii).